Consider the following 152-residue polypeptide: Deoxyuridine 5'-triphosphate nucleotidohydrolase (152 aa).

Residues 70–72 (RSG), Asn-83, 87–89 (LID), and Met-97 each bind substrate.

The protein belongs to the dUTPase family. Mg(2+) is required as a cofactor.

The enzyme catalyses dUTP + H2O = dUMP + diphosphate + H(+). Its pathway is pyrimidine metabolism; dUMP biosynthesis; dUMP from dCTP (dUTP route): step 2/2. Functionally, this enzyme is involved in nucleotide metabolism: it produces dUMP, the immediate precursor of thymidine nucleotides and it decreases the intracellular concentration of dUTP so that uracil cannot be incorporated into DNA. The polypeptide is Deoxyuridine 5'-triphosphate nucleotidohydrolase (Buchnera aphidicola subsp. Baizongia pistaciae (strain Bp)).